Here is a 147-residue protein sequence, read N- to C-terminus: Small ribosomal subunit protein eS19 (147 aa).

This sequence belongs to the eukaryotic ribosomal protein eS19 family. Component of the small ribosomal subunit.

The protein resides in the cytoplasm. Its subcellular location is the nucleus. In terms of biological role, component of the small ribosomal subunit. The ribosome is a large ribonucleoprotein complex responsible for the synthesis of proteins in the cell. Required for pre-rRNA processing and maturation of 40S ribosomal subunits. This chain is Small ribosomal subunit protein eS19 (rps19), found in Ictalurus punctatus (Channel catfish).